A 467-amino-acid polypeptide reads, in one-letter code: ATP synthase subunit beta 1 (467 aa).

150-157 contacts ATP; it reads GGAGVGKT.

This sequence belongs to the ATPase alpha/beta chains family. As to quaternary structure, F-type ATPases have 2 components, CF(1) - the catalytic core - and CF(0) - the membrane proton channel. CF(1) has five subunits: alpha(3), beta(3), gamma(1), delta(1), epsilon(1). CF(0) has three main subunits: a(1), b(2) and c(9-12). The alpha and beta chains form an alternating ring which encloses part of the gamma chain. CF(1) is attached to CF(0) by a central stalk formed by the gamma and epsilon chains, while a peripheral stalk is formed by the delta and b chains.

It is found in the cell inner membrane. It catalyses the reaction ATP + H2O + 4 H(+)(in) = ADP + phosphate + 5 H(+)(out). Produces ATP from ADP in the presence of a proton gradient across the membrane. The catalytic sites are hosted primarily by the beta subunits. The chain is ATP synthase subunit beta 1 from Vibrio campbellii (strain ATCC BAA-1116).